Reading from the N-terminus, the 138-residue chain is Large ribosomal subunit protein bL17 (138 aa).

Belongs to the bacterial ribosomal protein bL17 family. Part of the 50S ribosomal subunit. Contacts protein L32.

The protein is Large ribosomal subunit protein bL17 of Buchnera aphidicola subsp. Schizaphis graminum (strain Sg).